Here is a 103-residue protein sequence, read N- to C-terminus: Small ribosomal subunit protein uS10 (103 aa).

The protein belongs to the universal ribosomal protein uS10 family. In terms of assembly, part of the 30S ribosomal subunit.

Involved in the binding of tRNA to the ribosomes. This Pectobacterium atrosepticum (strain SCRI 1043 / ATCC BAA-672) (Erwinia carotovora subsp. atroseptica) protein is Small ribosomal subunit protein uS10.